We begin with the raw amino-acid sequence, 459 residues long: Ribulose bisphosphate carboxylase (459 aa).

Residue Asn111 participates in substrate binding. Catalysis depends on Lys166, which acts as the Proton acceptor. Substrate is bound at residue Lys168. The Mg(2+) site is built by Lys191, Asp193, and Glu194. An N6-carboxylysine modification is found at Lys191. Residue His287 is the Proton acceptor of the active site. Positions 288, 321, and 368 each coordinate substrate.

Belongs to the RuBisCO large chain family. Type II subfamily. Homodimer. Mg(2+) is required as a cofactor.

It catalyses the reaction 2 (2R)-3-phosphoglycerate + 2 H(+) = D-ribulose 1,5-bisphosphate + CO2 + H2O. The catalysed reaction is D-ribulose 1,5-bisphosphate + O2 = 2-phosphoglycolate + (2R)-3-phosphoglycerate + 2 H(+). In terms of biological role, ruBisCO catalyzes two reactions: the carboxylation of D-ribulose 1,5-bisphosphate, the primary event in carbon dioxide fixation, as well as the oxidative fragmentation of the pentose substrate. Both reactions occur simultaneously and in competition at the same active site. This chain is Ribulose bisphosphate carboxylase, found in Albidiferax ferrireducens (strain ATCC BAA-621 / DSM 15236 / T118) (Rhodoferax ferrireducens).